We begin with the raw amino-acid sequence, 545 residues long: CTP synthase (545 aa).

Residues 1–266 (MTTRYIFVTG…DDLVVKRFGL (266 aa)) are amidoligase domain. S14 is a binding site for CTP. A UTP-binding site is contributed by S14. Residues 15-20 (SLGKGI) and D72 contribute to the ATP site. 2 residues coordinate Mg(2+): D72 and E140. Residues 147–149 (DIE), 187–192 (KTKPTQ), and K223 each bind CTP. Residues 187-192 (KTKPTQ) and K223 contribute to the UTP site. 239 to 241 (KDV) lines the ATP pocket. The 252-residue stretch at 291 to 542 (VIGMVGKYIE…IAAASAHQKR (252 aa)) folds into the Glutamine amidotransferase type-1 domain. Residue G352 participates in L-glutamine binding. The active-site Nucleophile; for glutamine hydrolysis is C379. L-glutamine contacts are provided by residues 380–383 (LGMQ), E403, and R470. Catalysis depends on residues H515 and E517.

The protein belongs to the CTP synthase family. Homotetramer.

The enzyme catalyses UTP + L-glutamine + ATP + H2O = CTP + L-glutamate + ADP + phosphate + 2 H(+). The catalysed reaction is L-glutamine + H2O = L-glutamate + NH4(+). It carries out the reaction UTP + NH4(+) + ATP = CTP + ADP + phosphate + 2 H(+). It functions in the pathway pyrimidine metabolism; CTP biosynthesis via de novo pathway; CTP from UDP: step 2/2. With respect to regulation, allosterically activated by GTP, when glutamine is the substrate; GTP has no effect on the reaction when ammonia is the substrate. The allosteric effector GTP functions by stabilizing the protein conformation that binds the tetrahedral intermediate(s) formed during glutamine hydrolysis. Inhibited by the product CTP, via allosteric rather than competitive inhibition. Catalyzes the ATP-dependent amination of UTP to CTP with either L-glutamine or ammonia as the source of nitrogen. Regulates intracellular CTP levels through interactions with the four ribonucleotide triphosphates. This is CTP synthase from Shewanella baltica (strain OS155 / ATCC BAA-1091).